Consider the following 186-residue polypeptide: Large ribosomal subunit protein bL12c (186 aa).

A compositionally biased stretch (polar residues) spans 1 to 11 (MASTLSTITLR). Disordered regions lie at residues 1-23 (MASTLSTITLRSPSPSTASSTHA) and 162-186 (EGVSKDEAEDAKKQLEEAGAKVSIA). The transit peptide at 1 to 53 (MASTLSTITLRSPSPSTASSTHASIPFPKKALEFPIRTPKLHHRRATFLRPLA) directs the protein to the chloroplast. Residues 12–23 (SPSPSTASSTHA) show a composition bias toward low complexity. A compositionally biased stretch (basic and acidic residues) spans 162–180 (EGVSKDEAEDAKKQLEEAG).

Belongs to the bacterial ribosomal protein bL12 family.

The protein localises to the plastid. It localises to the chloroplast. The sequence is that of Large ribosomal subunit protein bL12c (RPL12) from Nicotiana tabacum (Common tobacco).